We begin with the raw amino-acid sequence, 602 residues long: Sensor histidine kinase AtsR (602 aa).

2 helical membrane passes run 11 to 31 (IIVA…FLLF) and 182 to 202 (AIVM…LLLF). Positions 242 to 461 (MVSHELRTPL…EFVVTLPVEL (220 aa)) constitute a Histidine kinase domain. Position 245 is a phosphohistidine; by autocatalysis (His-245). Residues 484–601 (HALVVDDNEN…TLNGIVSRLR (118 aa)) enclose the Response regulatory domain. At Asp-533 the chain carries 4-aspartylphosphate.

The protein resides in the cell inner membrane. It carries out the reaction ATP + protein L-histidine = ADP + protein N-phospho-L-histidine.. Its function is as follows. Member of a two-component regulatory system involved in control of gene expression; inhibits synthesis of (at least) the polyketide antibiotic thailandamide. Its two-component partner may be BTH_I0635. The polypeptide is Sensor histidine kinase AtsR (Burkholderia thailandensis (strain ATCC 700388 / DSM 13276 / CCUG 48851 / CIP 106301 / E264)).